An 860-amino-acid chain; its full sequence is Alpha,alpha-trehalose-phosphate synthase [UDP-forming] 6 (860 aa).

Phosphoserine is present on Ser-5. Residues 53 to 557 (DRIIIVANEL…ARSFLQDLER (505 aa)) are glycosyltransferase.

In the N-terminal section; belongs to the glycosyltransferase 20 family. It in the C-terminal section; belongs to the trehalose phosphatase family. Binds to the phosphopeptide-binding site of GRF/14-3-3. Post-translationally, phosphorylated. As to expression, expressed in seedlings, leaves, stems, flowers, siliques and roots.

The catalysed reaction is D-glucose 6-phosphate + UDP-alpha-D-glucose = alpha,alpha-trehalose 6-phosphate + UDP + H(+). Functionally, regulates plant architecture, shape of epidermal pavement cells and branching of trichomes. The sequence is that of Alpha,alpha-trehalose-phosphate synthase [UDP-forming] 6 from Arabidopsis thaliana (Mouse-ear cress).